We begin with the raw amino-acid sequence, 176 residues long: Adenine phosphoribosyltransferase (176 aa).

It belongs to the purine/pyrimidine phosphoribosyltransferase family. In terms of assembly, homodimer.

It is found in the cytoplasm. The enzyme catalyses AMP + diphosphate = 5-phospho-alpha-D-ribose 1-diphosphate + adenine. It participates in purine metabolism; AMP biosynthesis via salvage pathway; AMP from adenine: step 1/1. Functionally, catalyzes a salvage reaction resulting in the formation of AMP, that is energically less costly than de novo synthesis. The protein is Adenine phosphoribosyltransferase of Leuconostoc mesenteroides subsp. mesenteroides (strain ATCC 8293 / DSM 20343 / BCRC 11652 / CCM 1803 / JCM 6124 / NCDO 523 / NBRC 100496 / NCIMB 8023 / NCTC 12954 / NRRL B-1118 / 37Y).